The primary structure comprises 422 residues: MTNQLFDAYFTAPAMREIFSDRGRLQGMLDFEAALARAEAAAGLVPHSAVAAIEAACKAERYDVGALANAIATAGNSAIPLVKALGKVIASGVPEAERYVHLGATSQDAMDTGLVLQLRDALDLIEADLGKLADTLSQQALKHADTPMVGRTWLQHATPVTLGMKLAGVLGALTRHRQRLQELGPPCWCCSSGGASGSLAALGSKAMPVAEALAEQLKLSLPEQPWHTQRDRLVEFASVLGLVAGSLGKFGRDVSLLMQTEAGEVFEPSAPGKGGSSTMPHKRNPVGAAVLIGAATRVPGLVSTLFAAMPQEHERSLGLWHAEWETLPDICCLVSGALRQAQVIAEGIEVDAARMRRNLDLTQGLVLAEAVSIVLARTLGRDRAHHLLEQCCQRAVAEQRHLRAVLGDDPQVSAELSAEELD.

Belongs to the class-II fumarase/aspartase family. Homotetramer.

Its subcellular location is the cytoplasm. It catalyses the reaction 2-(carboxymethyl)-5-oxo-2,5-dihydro-2-furoate = 3-carboxy-cis,cis-muconate + H(+). Its pathway is aromatic compound metabolism; beta-ketoadipate pathway; 5-oxo-4,5-dihydro-2-furylacetate from 3-carboxy-cis,cis-muconate: step 1/2. Catalyzes an anti cycloisomerization. This Pseudomonas putida (Arthrobacter siderocapsulatus) protein is 3-carboxy-cis,cis-muconate cycloisomerase (pcaB).